The following is a 257-amino-acid chain: MFKRVLLKLSGEFLSGPAPDGSAGFGISPDTTAQLARLITDALTGTNVELAIVIGGGNLWRGARNGKGMDAATADYIGMLGTVMNAMALQDAMEAAGQPTRVMTAIQMAAVAEPYIRRRAIRHLEKGRVVIFGGGNGAPFFTTDTTATLRALEIGADVVLMAKNKVDGVYDSDPRKNPDARRLDSLTHIEVVERRLEVMDATALTLCMDKGLPIVVFDLFQPGNLRRLLEGERVGTLIESERRPERLSHDPSSHVPR.

Residue 8–11 (KLSG) coordinates ATP. The tract at residues 21–26 (GSAGFG) is involved in allosteric activation by GTP. A UMP-binding site is contributed by Gly-56. Positions 57 and 61 each coordinate ATP. UMP contacts are provided by residues Asp-75 and 136–143 (NGAPFFTT). Residues Asn-164, Tyr-170, and Asp-173 each contribute to the ATP site.

It belongs to the UMP kinase family. Homohexamer.

The protein resides in the cytoplasm. The catalysed reaction is UMP + ATP = UDP + ADP. It participates in pyrimidine metabolism; CTP biosynthesis via de novo pathway; UDP from UMP (UMPK route): step 1/1. With respect to regulation, allosterically activated by GTP. Inhibited by UTP. Functionally, catalyzes the reversible phosphorylation of UMP to UDP. This Deinococcus geothermalis (strain DSM 11300 / CIP 105573 / AG-3a) protein is Uridylate kinase.